The chain runs to 434 residues: ATP-dependent RNA helicase RhlB (434 aa).

Positions 9–37 (KKFADFPLKPEILAALNENGFEFCTPIQA) match the Q motif motif. Residues 40 to 219 (LPILLNAKDI…YDHMNDPEKV (180 aa)) form the Helicase ATP-binding domain. Position 53–60 (53–60 (AQTGTGKT)) interacts with ATP. The short motif at 165–168 (DEAD) is the DEAD box element. The Helicase C-terminal domain maps to 243 to 390 (KMRLLLSLIE…VSNYDKDALL (148 aa)). Positions 390–434 (LDDIPPPARIHRKPPTSRTRDGGSKGAHRSGGNTSRPPRHRTRRP) are disordered.

Belongs to the DEAD box helicase family. RhlB subfamily. Component of the RNA degradosome, which is a multiprotein complex involved in RNA processing and mRNA degradation.

The protein localises to the cytoplasm. The catalysed reaction is ATP + H2O = ADP + phosphate + H(+). Its function is as follows. DEAD-box RNA helicase involved in RNA degradation. Has RNA-dependent ATPase activity and unwinds double-stranded RNA. This is ATP-dependent RNA helicase RhlB from Shewanella frigidimarina (strain NCIMB 400).